The primary structure comprises 820 residues: Sucrose synthase 2 (820 aa).

Positions 276–753 (MVFNVVILSP…GLKRIYEKYT (478 aa)) are GT-B glycosyltransferase.

This sequence belongs to the glycosyltransferase 1 family. Plant sucrose synthase subfamily.

The catalysed reaction is an NDP-alpha-D-glucose + D-fructose = a ribonucleoside 5'-diphosphate + sucrose + H(+). Its function is as follows. Sucrose-cleaving enzyme that provides UDP-glucose and fructose for various metabolic pathways. In Tulipa gesneriana (Garden tulip), this protein is Sucrose synthase 2.